Here is a 498-residue protein sequence, read N- to C-terminus: MEIEKYTPEQIEELGKGARDFAFAHGVVFTELSVSKEGRNIATQIPITLFPSVIPHGAFVEAVSVQKAYNKLYAKIANDYEFLRLHLQSITKYDEFMNKLWNLYQKHREAVAHLKENQFQPLSLGVFRSDYMVHQDDSFIGCKQVEFNTISVSFGGVSKAVSNLHAYCSQSGLYRKPLTTNYLTVNTSVSGICTGISNAVDAYRDYVKNITSKMNIASDNTKPIVLFVVKGGERNITDQRTLEYELLNRFHVISKRIDIAELNSLIHDKSSNKLYMKTSFTTYEVAVVYYRVGYALDDYPSQEAWDMRLTIENTLAIKCPSISTHLAGSKKIQQVLAESNALERFLEGDELQAVRSTFADMYPLDDTPRGKEGIKLAFEKPEDFVLKPQREGGGNNTYGKDIPGLLSKMPQEEWDSYILMRYINAVPSQNYILKGERPEKFDVVDEIGILGTIVWNIKTDEVVQNGQSGFICRTKPKKTNEGGVATGYASLSSIELSE.

Arg-128 is a substrate binding site. Residue Glu-146 participates in ATP binding. The Mg(2+) site is built by Glu-146 and Asn-148. Substrate contacts are provided by residues 150-153 (ISVS), 233-235 (ERN), Gln-239, and 291-294 (RVGY). Lys-330 is an ATP binding site. Ser-356 is modified (phosphoserine). Residues 387 to 396 (KPQREGGGNN), Tyr-398, 420 to 423 (MRYI), and Glu-446 each bind ATP. Position 391 (Glu-391) interacts with Mg(2+). Arg-473 serves as a coordination point for substrate. 2 residues coordinate ATP: Lys-475 and Glu-481. 484 to 485 (VA) provides a ligand contact to substrate.

Belongs to the eukaryotic GSH synthase family. As to quaternary structure, heterodimer composed of a large and a small chain. Requires Mg(2+) as cofactor.

It carries out the reaction gamma-L-glutamyl-L-cysteine + glycine + ATP = glutathione + ADP + phosphate + H(+). Its pathway is sulfur metabolism; glutathione biosynthesis; glutathione from L-cysteine and L-glutamate: step 2/2. The sequence is that of Glutathione synthetase large chain (gsa1) from Schizosaccharomyces pombe (strain 972 / ATCC 24843) (Fission yeast).